A 341-amino-acid polypeptide reads, in one-letter code: Glycerol-3-phosphate dehydrogenase [NAD(P)+] (341 aa).

Serine 14, phenylalanine 15, arginine 35, and lysine 108 together coordinate NADPH. Positions 108 and 136 each coordinate sn-glycerol 3-phosphate. Alanine 140 serves as a coordination point for NADPH. Sn-glycerol 3-phosphate is bound by residues lysine 191, aspartate 244, serine 254, arginine 255, and asparagine 256. Lysine 191 acts as the Proton acceptor in catalysis. Residue arginine 255 coordinates NADPH. NADPH-binding residues include valine 279 and glutamate 281.

This sequence belongs to the NAD-dependent glycerol-3-phosphate dehydrogenase family.

It localises to the cytoplasm. The catalysed reaction is sn-glycerol 3-phosphate + NAD(+) = dihydroxyacetone phosphate + NADH + H(+). It catalyses the reaction sn-glycerol 3-phosphate + NADP(+) = dihydroxyacetone phosphate + NADPH + H(+). The protein operates within membrane lipid metabolism; glycerophospholipid metabolism. Its function is as follows. Catalyzes the reduction of the glycolytic intermediate dihydroxyacetone phosphate (DHAP) to sn-glycerol 3-phosphate (G3P), the key precursor for phospholipid synthesis. The sequence is that of Glycerol-3-phosphate dehydrogenase [NAD(P)+] from Pseudomonas savastanoi pv. phaseolicola (strain 1448A / Race 6) (Pseudomonas syringae pv. phaseolicola (strain 1448A / Race 6)).